The following is a 324-amino-acid chain: Glutamyl-Q tRNA(Asp) synthetase (324 aa).

Residues 5–9 and E41 each bind L-glutamate; that span reads RLAPS. The 'HIGH' region signature appears at 8 to 18; the sequence is PSPTGNIHLGN. Zn(2+) contacts are provided by C105, C107, Y128, and C132. L-glutamate is bound by residues Y193 and R211. The 'KMSKS' region signature appears at 249 to 253; that stretch reads RLAKR. K252 provides a ligand contact to ATP.

The protein belongs to the class-I aminoacyl-tRNA synthetase family. GluQ subfamily. The cofactor is Zn(2+).

Catalyzes the tRNA-independent activation of glutamate in presence of ATP and the subsequent transfer of glutamate onto a tRNA(Asp). Glutamate is transferred on the 2-amino-5-(4,5-dihydroxy-2-cyclopenten-1-yl) moiety of the queuosine in the wobble position of the QUC anticodon. The sequence is that of Glutamyl-Q tRNA(Asp) synthetase from Nitratidesulfovibrio vulgaris (strain ATCC 29579 / DSM 644 / CCUG 34227 / NCIMB 8303 / VKM B-1760 / Hildenborough) (Desulfovibrio vulgaris).